The primary structure comprises 394 residues: Elongation factor Tu (394 aa).

The tr-type G domain occupies 10–204 (KEHANIGTIG…AVDDYIPTPE (195 aa)). A G1 region spans residues 19–26 (GHVDHGKT). 19 to 26 (GHVDHGKT) contributes to the GTP binding site. Thr26 is a Mg(2+) binding site. Positions 60–64 (GITIN) are G2. Residues 81-84 (DCPG) form a G3 region. Residues 81-85 (DCPGH) and 136-139 (NKVD) contribute to the GTP site. Residues 136-139 (NKVD) form a G4 region. The tract at residues 174-176 (SAL) is G5.

Belongs to the TRAFAC class translation factor GTPase superfamily. Classic translation factor GTPase family. EF-Tu/EF-1A subfamily. As to quaternary structure, monomer.

It localises to the cytoplasm. It carries out the reaction GTP + H2O = GDP + phosphate + H(+). Its function is as follows. GTP hydrolase that promotes the GTP-dependent binding of aminoacyl-tRNA to the A-site of ribosomes during protein biosynthesis. The polypeptide is Elongation factor Tu (Staphylococcus epidermidis (strain ATCC 35984 / DSM 28319 / BCRC 17069 / CCUG 31568 / BM 3577 / RP62A)).